The sequence spans 542 residues: Probable E3 ubiquitin-protein ligase ARI11 (542 aa).

A disordered region spans residues 1 to 25; the sequence is MSSSDRDIIDIESGEEDLYSDGGND. Over residues 10–19 the composition is skewed to acidic residues; that stretch reads DIESGEEDLY. The interval 135–342 is TRIAD supradomain; that stretch reads VDIQCGICFE…SDHKACNAFK (208 aa). Cys-139, Cys-142, Cys-156, His-158, Cys-161, Cys-164, Cys-184, Cys-189, Cys-228, Cys-233, Cys-251, Cys-253, Cys-258, Cys-261, His-266, Cys-271, Cys-298, and Cys-301 together coordinate Zn(2+). The RING-type 1 zinc-finger motif lies at 139–189; the sequence is CGICFESYTRKEIARVSCGHPYCKTCWTGYITTKIEDGPGCLRVKCPEPSC. The IBR-type zinc finger occupies 208 to 271; it reads DKYYRYFLRS…CEDAHSPVDC (64 aa). Residues 298–328 form an RING-type 2; atypical zinc finger; the sequence is CPKCKRPIEKNTGCNHMSCSAPCRHYFCWAC. Cys-311 is a catalytic residue. Cys-316, Cys-320, Cys-325, Cys-328, His-335, and Cys-338 together coordinate Zn(2+).

Belongs to the RBR family. Ariadne subfamily. Zn(2+) is required as a cofactor.

The enzyme catalyses [E2 ubiquitin-conjugating enzyme]-S-ubiquitinyl-L-cysteine + [acceptor protein]-L-lysine = [E2 ubiquitin-conjugating enzyme]-L-cysteine + [acceptor protein]-N(6)-ubiquitinyl-L-lysine.. The protein operates within protein modification; protein ubiquitination. In terms of biological role, might act as an E3 ubiquitin-protein ligase, or as part of E3 complex, which accepts ubiquitin from specific E2 ubiquitin-conjugating enzymes and then transfers it to substrates. The sequence is that of Probable E3 ubiquitin-protein ligase ARI11 (ARI11) from Arabidopsis thaliana (Mouse-ear cress).